The sequence spans 232 residues: Ubiquinone biosynthesis O-methyltransferase (232 aa).

S-adenosyl-L-methionine contacts are provided by Arg-36, Gly-55, Asp-76, and Met-120.

It belongs to the methyltransferase superfamily. UbiG/COQ3 family.

It catalyses the reaction a 3-demethylubiquinol + S-adenosyl-L-methionine = a ubiquinol + S-adenosyl-L-homocysteine + H(+). The catalysed reaction is a 3-(all-trans-polyprenyl)benzene-1,2-diol + S-adenosyl-L-methionine = a 2-methoxy-6-(all-trans-polyprenyl)phenol + S-adenosyl-L-homocysteine + H(+). The protein operates within cofactor biosynthesis; ubiquinone biosynthesis. Its function is as follows. O-methyltransferase that catalyzes the 2 O-methylation steps in the ubiquinone biosynthetic pathway. The polypeptide is Ubiquinone biosynthesis O-methyltransferase (Burkholderia vietnamiensis (strain G4 / LMG 22486) (Burkholderia cepacia (strain R1808))).